We begin with the raw amino-acid sequence, 620 residues long: 1-deoxy-D-xylulose-5-phosphate synthase (620 aa).

Thiamine diphosphate is bound by residues His-80 and 121 to 123; that span reads GHS. Asp-152 is a Mg(2+) binding site. Residues 153–154, Asn-181, Tyr-288, and Glu-370 each bind thiamine diphosphate; that span reads GA. Asn-181 is a Mg(2+) binding site.

The protein belongs to the transketolase family. DXPS subfamily. As to quaternary structure, homodimer. It depends on Mg(2+) as a cofactor. The cofactor is thiamine diphosphate.

The enzyme catalyses D-glyceraldehyde 3-phosphate + pyruvate + H(+) = 1-deoxy-D-xylulose 5-phosphate + CO2. It functions in the pathway metabolic intermediate biosynthesis; 1-deoxy-D-xylulose 5-phosphate biosynthesis; 1-deoxy-D-xylulose 5-phosphate from D-glyceraldehyde 3-phosphate and pyruvate: step 1/1. In terms of biological role, catalyzes the acyloin condensation reaction between C atoms 2 and 3 of pyruvate and glyceraldehyde 3-phosphate to yield 1-deoxy-D-xylulose-5-phosphate (DXP). This is 1-deoxy-D-xylulose-5-phosphate synthase from Salmonella heidelberg (strain SL476).